The following is a 664-amino-acid chain: Fructose-1,6-bisphosphatase class 3 (664 aa).

Belongs to the FBPase class 3 family. Mn(2+) serves as cofactor.

The enzyme catalyses beta-D-fructose 1,6-bisphosphate + H2O = beta-D-fructose 6-phosphate + phosphate. The protein operates within carbohydrate biosynthesis; gluconeogenesis. The protein is Fructose-1,6-bisphosphatase class 3 of Bacteroides thetaiotaomicron (strain ATCC 29148 / DSM 2079 / JCM 5827 / CCUG 10774 / NCTC 10582 / VPI-5482 / E50).